The following is a 4171-amino-acid chain: Cytoplasmic dynein 2 heavy chain 1 (4171 aa).

Residues Met1–Glu1598 form a stem region. Gly115–Asn122 is an ATP binding site. Coiled-coil stretches lie at residues Ala164–Leu203, Lys629–Glu693, Asp829–Leu861, Glu927–Arg1048, and Ser1354–Lys1383. AAA regions lie at residues Tyr1599–Gly1823, Glu1883–His2100, Val2184–Ser2432, and Arg2527–Tyr2767. Residues Gly1637–Thr1644, Gly1921–Ser1928, Gly2226–Gln2233, and Gly2565–Arg2572 each bind ATP. Residues Gln2776 to Ile3064 form a stalk region. Coiled coils occupy residues Glu2790–Gln2877, Glu2999–Arg3059, and Glu3308–Gln3336. 2 AAA regions span residues Ala3140 to Lys3367 and Leu3575 to Gln3784.

Belongs to the dynein heavy chain family. In terms of assembly, the cytoplasmic dynein complex 2 is probably composed by a heavy chain che-3 homodimer and a number of light intermediate chains.

It localises to the cell projection. The protein resides in the cilium membrane. Its subcellular location is the cytoplasm. The protein localises to the cytoskeleton. Its function is as follows. Functions as a motor for intraflagellar retrograde transport in chemosensory neurons. Functions in cilia biogenesis. The polypeptide is Cytoplasmic dynein 2 heavy chain 1 (Caenorhabditis elegans).